The chain runs to 448 residues: Tubulin beta chain (448 aa).

The GTP site is built by glutamine 11, glutamate 69, serine 138, glycine 142, threonine 143, glycine 144, asparagine 204, and asparagine 226. Glutamate 69 contacts Mg(2+). Residues 425-448 (YQDASISEGEEEYLEEEEPLEHEE) are disordered. Acidic residues predominate over residues 432-448 (EGEEEYLEEEEPLEHEE).

It belongs to the tubulin family. In terms of assembly, dimer of alpha and beta chains. A typical microtubule is a hollow water-filled tube with an outer diameter of 25 nm and an inner diameter of 15 nM. Alpha-beta heterodimers associate head-to-tail to form protofilaments running lengthwise along the microtubule wall with the beta-tubulin subunit facing the microtubule plus end conferring a structural polarity. Microtubules usually have 13 protofilaments but different protofilament numbers can be found in some organisms and specialized cells. Mg(2+) is required as a cofactor.

It localises to the cytoplasm. The protein localises to the cytoskeleton. Tubulin is the major constituent of microtubules, a cylinder consisting of laterally associated linear protofilaments composed of alpha- and beta-tubulin heterodimers. Microtubules grow by the addition of GTP-tubulin dimers to the microtubule end, where a stabilizing cap forms. Below the cap, tubulin dimers are in GDP-bound state, owing to GTPase activity of alpha-tubulin. In Aspergillus oryzae (strain ATCC 42149 / RIB 40) (Yellow koji mold), this protein is Tubulin beta chain (benA56).